A 222-amino-acid chain; its full sequence is Putative N-acetylmannosamine-6-phosphate 2-epimerase (222 aa).

It belongs to the NanE family.

It carries out the reaction an N-acyl-D-glucosamine 6-phosphate = an N-acyl-D-mannosamine 6-phosphate. Its pathway is amino-sugar metabolism; N-acetylneuraminate degradation; D-fructose 6-phosphate from N-acetylneuraminate: step 3/5. Converts N-acetylmannosamine-6-phosphate (ManNAc-6-P) to N-acetylglucosamine-6-phosphate (GlcNAc-6-P). The chain is Putative N-acetylmannosamine-6-phosphate 2-epimerase from Staphylococcus aureus (strain MSSA476).